The sequence spans 352 residues: Photosystem II D2 protein (352 aa).

A helical membrane pass occupies residues 40–60; it reads CAYMALGGWLTGTTFVTSWYT. His-117 is a binding site for chlorophyll a. Residues 124–140 traverse the membrane as a helical segment; it reads GFMLRQFEIARLVGIRP. Pheophytin a-binding residues include Gln-129 and Asn-142. Residues 152-165 form a helical membrane-spanning segment; that stretch reads VFVSVFLMYPLGQS. His-197 is a chlorophyll a binding site. Residues 207 to 227 form a helical membrane-spanning segment; it reads GALLCAIHGATVENTLFEDGD. His-214 and Phe-261 together coordinate a plastoquinone. Residue His-214 participates in Fe cation binding. His-268 serves as a coordination point for Fe cation. The chain crosses the membrane as a helical span at residues 278 to 294; that stretch reads GLWTSSIGIIGLALNLR.

This sequence belongs to the reaction center PufL/M/PsbA/D family. PSII is composed of 1 copy each of membrane proteins PsbA, PsbB, PsbC, PsbD, PsbE, PsbF, PsbH, PsbI, PsbJ, PsbK, PsbL, PsbM, PsbT, PsbX, PsbY, PsbZ, Psb30/Ycf12, peripheral proteins PsbO, CyanoQ (PsbQ), PsbU, PsbV and a large number of cofactors. It forms dimeric complexes. The D1/D2 heterodimer binds P680, chlorophylls that are the primary electron donor of PSII, and subsequent electron acceptors. It shares a non-heme iron and each subunit binds pheophytin, quinone, additional chlorophylls, carotenoids and lipids. There is also a Cl(-1) ion associated with D1 and D2, which is required for oxygen evolution. The PSII complex binds additional chlorophylls, carotenoids and specific lipids. serves as cofactor.

The protein resides in the cellular thylakoid membrane. It carries out the reaction 2 a plastoquinone + 4 hnu + 2 H2O = 2 a plastoquinol + O2. Its function is as follows. Photosystem II (PSII) is a light-driven water:plastoquinone oxidoreductase that uses light energy to abstract electrons from H(2)O, generating O(2) and a proton gradient subsequently used for ATP formation. It consists of a core antenna complex that captures photons, and an electron transfer chain that converts photonic excitation into a charge separation. The D1/D2 (PsbA/PsbD) reaction center heterodimer binds P680, the primary electron donor of PSII as well as several subsequent electron acceptors. D2 is needed for assembly of a stable PSII complex. The protein is Photosystem II D2 protein of Synechococcus sp. (strain RCC307).